Here is a 721-residue protein sequence, read N- to C-terminus: Catalase-peroxidase 1 (721 aa).

A cross-link (tryptophyl-tyrosyl-methioninium (Trp-Tyr) (with M-249)) is located at residues Trp-98–Tyr-223. The Proton acceptor role is filled by His-99. Positions Tyr-223–Met-249 form a cross-link, tryptophyl-tyrosyl-methioninium (Tyr-Met) (with W-98). Residue His-264 coordinates heme b.

The protein belongs to the peroxidase family. Peroxidase/catalase subfamily. Homodimer or homotetramer. The cofactor is heme b. Formation of the three residue Trp-Tyr-Met cross-link is important for the catalase, but not the peroxidase activity of the enzyme.

It carries out the reaction H2O2 + AH2 = A + 2 H2O. The enzyme catalyses 2 H2O2 = O2 + 2 H2O. Its function is as follows. Bifunctional enzyme with both catalase and broad-spectrum peroxidase activity. This chain is Catalase-peroxidase 1, found in Legionella pneumophila subsp. pneumophila (strain Philadelphia 1 / ATCC 33152 / DSM 7513).